A 475-amino-acid chain; its full sequence is tRNA-2-methylthio-N(6)-dimethylallyladenosine synthase (475 aa).

The region spanning 3–120 (KKLHIKTWGC…LPEMIDQIKD (118 aa)) is the MTTase N-terminal domain. Residues cysteine 12, cysteine 49, cysteine 83, cysteine 157, cysteine 161, and cysteine 164 each coordinate [4Fe-4S] cluster. The Radical SAM core domain occupies 143 to 375 (RAEGPSAFVS…QDRITQQAMR (233 aa)). Residues 378–441 (RQMVGTVQRI…TNSLRGVFIR (64 aa)) form the TRAM domain.

Belongs to the methylthiotransferase family. MiaB subfamily. In terms of assembly, monomer. The cofactor is [4Fe-4S] cluster.

The protein resides in the cytoplasm. The catalysed reaction is N(6)-dimethylallyladenosine(37) in tRNA + (sulfur carrier)-SH + AH2 + 2 S-adenosyl-L-methionine = 2-methylsulfanyl-N(6)-dimethylallyladenosine(37) in tRNA + (sulfur carrier)-H + 5'-deoxyadenosine + L-methionine + A + S-adenosyl-L-homocysteine + 2 H(+). Its function is as follows. Catalyzes the methylthiolation of N6-(dimethylallyl)adenosine (i(6)A), leading to the formation of 2-methylthio-N6-(dimethylallyl)adenosine (ms(2)i(6)A) at position 37 in tRNAs that read codons beginning with uridine. The protein is tRNA-2-methylthio-N(6)-dimethylallyladenosine synthase of Shewanella pealeana (strain ATCC 700345 / ANG-SQ1).